The following is a 1159-amino-acid chain: MKINNNFNIDSLIDNRDVAIVRGRKTDTFFKVFQVAPNIWIAPERYYGESLNINEDQKSDGGIYDSNFLSTNDEKDEFLQATVKILQRINNNVIGAKLLSLISTAIPFPYEYKPGDYRQTNYLVSKDNQHYYTANLVIFGPGTNIVENNAIYYKKEDSENGMGTMSEIWFQPFLTYKYGQFYVDPALELIKCLIKSLYYLYGIKPSDDLSIPYRLRSELNSFEYSELDMIDFLISGGTEYKLLDTNPYWFTDNYFIDAPKNFEKYKNDYETKIKNNNDIANSIKLYLEQKFKTNAQDIWELNLSYFSTEFEIMMPEIFNNALNHYYRKEYYVIDYFKNYNINGFINGQIKTILPLSKYNKNIINKPELVVNLINENNTVLMKSNVYGDGLKGTMDNFYAAYKIPYNIGDEYHINYSYLNNVNVEEINNIPPINDADIYPYRKNSDPFIPVYNITETKEINTTTPLSVNYLQAQVTNSNDISLSSDFSKVISSKDRSLVYSFLDNTIDYLDSIKYDEPIDTDKKYYLWLKEIFRNYSFDMTETQEVNTPCGINKVVPWLGKALNILNTGNSFIEEFKSLGPISLINKKENITMPKIEIDEIPNSMLNLSFKDLSENLFNRFSKNNSYFEKIYYDFLDQWWTQYYSQYFDLICMAKKSILAQETLIKKIIQKKLSYLIGNSNISSDNLALMNLTTTNTLRDISNESQIAMNNVDSFLNSAAICVFEGNIYSKFISFMEQCINNINKNTREFIQKCTNITENEKLQLINQNIFSSLDFDFLNIENLKSLFSSETALLIKEETSPYELVLYAFQEPDNNAIGDASAKNTSIEYSKDIDLVYGINSDALYLNGSNQSISFSNDFFENGLTNSFSIYFWLRNLGKDTIKSKLIGSKEDNCGWEIYFQDTGLVFNMIDSNGNEKNIYLSDVSNNSWHYITISVDRLKEQLLIFIDDNLVANESIKEILNIYSSNIISLLSENNPSYIEGLTILNKPTTSQEVLNNYFKVLNNSYIRDSNEERLEYNKTYQLYNYVFSDKPICEVKQNNNIYLTINNTNNLNLQPSKFKLLSINSNKQYVQKFDEVIISILGNMEKYIDISEDNRLQLIDNKNGAKKMIISNDMFISNCLTLSCGGKYICLSMKDENHNWMICNNDMSKYLYLWSFK.

Positions 1 to 375 are light chain nLC; it reads MKINNNFNID…PELVVNLINE (375 aa). The interval 376–795 is N-heavy chain nHN; the sequence is NNTVLMKSNV…LFSSETALLI (420 aa). The interval 796–1159 is C-heavy chain nHC; the sequence is KEETSPYELV…SKYLYLWSFK (364 aa).

It belongs to the botulism non-toxic nonhemagglutinin family. As to quaternary structure, part of a crude toxin extract that includes BoNTA2/NTNH, P47, OrfX2 and OrfX3; OrfX1 was not detected. A purified toxin complex has NTNH and dichain BoNTA2. Forms a highly interlocked heterodimer with botulinum neurotoxin type A2 at pH 6.0, called the minimally functional progenitor toxin complex (M-PTC) (BoNT/A, botA). Shorter forms of this protein are seen in vivo.

Its function is as follows. Part of a botulinum neurotoxin type A2 (BoNT) locus; may be part of a progenitor toxin complex required to protect BoNT during its passage through the host gastrointestinal tract. The protein is Non-toxic nonhemagglutinin type A of Clostridium botulinum (strain Kyoto / Type A2).